The sequence spans 521 residues: Tubulin-specific chaperone E (521 aa).

In terms of domain architecture, CAP-Gly spans 24 to 68; the sequence is GPVPPTAGVWLGVEWDHPERGKHDGSHDGVRYFTCRHPTGGSFVR. LRR repeat units follow at residues 147 to 168, 173 to 194, 199 to 220, 224 to 245, 247 to 268, 271 to 292, and 301 to 322; these read FVQS…AAIT, SLQE…SSLS, HLRV…HCAP, QVEE…EHVL, ALTV…EISH, RLER…DVPA, and ALKE…NELE. Positions 335–377 constitute an LRRCT domain; it reads NPLLHKEKNLETARQIMIARLGQLELLDMRQILSDERRGAELD.

This sequence belongs to the TBCE family. Supercomplex made of cofactors A to E. Cofactors A and D function by capturing and stabilizing tubulin in a quasi-native conformation. Cofactor E binds to the cofactor D-tubulin complex; interaction with cofactor C then causes the release of tubulin polypeptides that are committed to the native state.

The protein resides in the cytoplasm. It localises to the cytoskeleton. Its function is as follows. Tubulin-folding protein; involved in the second step of the tubulin folding pathway. The sequence is that of Tubulin-specific chaperone E (tbce) from Danio rerio (Zebrafish).